The chain runs to 561 residues: Transmembrane protein 209 (561 aa).

Serine 11 carries the phosphoserine modification. Residues 28-48 (VVLAWGLLNVSMAGMIYTEMT) form a helical membrane-spanning segment. Asparagine 57 carries N-linked (GlcNAc...) asparagine glycosylation. The chain crosses the membrane as a helical span at residues 60-80 (YWPLWYIELALASLFSLNALF). At serine 98 the chain carries Phosphoserine. Disordered regions lie at residues 120 to 156 (LAATQISPSPPSPSIQGQSVLSYSPSRSPSTSPKFAT) and 200 to 232 (SSPYPTTVGPVESSGLRARYRSPPTVYNSPTDK). Residues 138-152 (SVLSYSPSRSPSTSP) show a composition bias toward low complexity. Phosphoserine occurs at positions 201 and 248. Residues 250–270 (EEKQHRVKLGSPDSTSPSTSP) are disordered. Low complexity predominate over residues 260–270 (SPDSTSPSTSP). Residue asparagine 274 is glycosylated (N-linked (GlcNAc...) asparagine). Residue serine 278 is modified to Phosphoserine.

As to quaternary structure, interacts with NUP205.

The protein localises to the membrane. It localises to the nucleus envelope. It is found in the golgi apparatus. The protein resides in the cytoplasm. In terms of biological role, nuclear envelope protein which in association with NUP205, may be involved in nuclear transport of various nuclear proteins in addition to MYC. The sequence is that of Transmembrane protein 209 (Tmem209) from Mus musculus (Mouse).